Consider the following 145-residue polypeptide: Superoxide dismutase [Mn/Fe] (145 aa).

Positions 10 and 64 each coordinate Fe(3+). Mn(2+) contacts are provided by His-10 and His-64. Residues 126–145 are disordered; that stretch reads TSTANQDTPISEGKKPILGL.

This sequence belongs to the iron/manganese superoxide dismutase family. Mn(2+) is required as a cofactor. Fe(3+) serves as cofactor.

It carries out the reaction 2 superoxide + 2 H(+) = H2O2 + O2. Functionally, destroys superoxide anion radicals which are normally produced within the cells and which are toxic to biological systems. Catalyzes the dismutation of superoxide anion radicals into O2 and H2O2 by successive reduction and oxidation of the transition metal ion at the active site. This is Superoxide dismutase [Mn/Fe] (sodA) from Streptococcus oralis.